The sequence spans 245 residues: tRNA1(Val) (adenine(37)-N6)-methyltransferase (245 aa).

It belongs to the methyltransferase superfamily. tRNA (adenine-N(6)-)-methyltransferase family.

The protein resides in the cytoplasm. It catalyses the reaction adenosine(37) in tRNA1(Val) + S-adenosyl-L-methionine = N(6)-methyladenosine(37) in tRNA1(Val) + S-adenosyl-L-homocysteine + H(+). In terms of biological role, specifically methylates the adenine in position 37 of tRNA(1)(Val) (anticodon cmo5UAC). The chain is tRNA1(Val) (adenine(37)-N6)-methyltransferase from Salmonella arizonae (strain ATCC BAA-731 / CDC346-86 / RSK2980).